A 470-amino-acid chain; its full sequence is Leucine-rich repeat extensin-like protein 6 (470 aa).

Positions 1–28 are cleaved as a signal peptide; sequence MREDTFFFQWWFLVSGLSFIFLLPQAFT. Asn-83 carries N-linked (GlcNAc...) asparagine glycosylation. LRR repeat units lie at residues 98–122, 123–146, 147–170, 171–194, 196–217, 219–241, 243–265, 266–290, 291–314, and 316–337; these read VLTV…LGLL, TDLA…LKCL, HLLH…IFSL, PSLK…LFDL, LDAL…IGNS, VSVL…FYKM, KTLH…EIGL, LNQL…IGDM, KSLE…ICRL, and RLEN…CLRL. A glycan (N-linked (GlcNAc...) asparagine) is linked at Asn-319. A disordered region spans residues 378-411; it reads SPPPPPPPPPPPPPPPPPPPPPPPPPPPPPYVYP. Residues 378–470 form a contains the Ser-Pro(4) repeats region; it reads SPPPPPPPPP…CNDLPTPVHY (93 aa).

Hydroxylated on proline residues in the S-P-P-P-P repeat. In terms of processing, O-glycosylated on hydroxyprolines. Expressed in roots.

Its subcellular location is the secreted. The protein localises to the cell wall. Functionally, modulates cell morphogenesis by regulating cell wall formation and assembly, and/or growth polarization. The chain is Leucine-rich repeat extensin-like protein 6 (LRX6) from Arabidopsis thaliana (Mouse-ear cress).